The primary structure comprises 408 residues: S-adenosylmethionine:tRNA ribosyltransferase-isomerase (408 aa).

Belongs to the QueA family. In terms of assembly, monomer.

The protein localises to the cytoplasm. The enzyme catalyses 7-aminomethyl-7-carbaguanosine(34) in tRNA + S-adenosyl-L-methionine = epoxyqueuosine(34) in tRNA + adenine + L-methionine + 2 H(+). It functions in the pathway tRNA modification; tRNA-queuosine biosynthesis. Transfers and isomerizes the ribose moiety from AdoMet to the 7-aminomethyl group of 7-deazaguanine (preQ1-tRNA) to give epoxyqueuosine (oQ-tRNA). In Trichormus variabilis (strain ATCC 29413 / PCC 7937) (Anabaena variabilis), this protein is S-adenosylmethionine:tRNA ribosyltransferase-isomerase.